The primary structure comprises 319 residues: Quinolinate synthase (319 aa).

2 residues coordinate iminosuccinate: His-34 and Ser-51. Cys-96 contacts [4Fe-4S] cluster. Residues 122-124 and Ser-139 each bind iminosuccinate; that span reads YIN. Cys-182 lines the [4Fe-4S] cluster pocket. Residues 208–210 and Thr-225 each bind iminosuccinate; that span reads HPE. Cys-276 is a [4Fe-4S] cluster binding site.

Belongs to the quinolinate synthase family. Type 2 subfamily. [4Fe-4S] cluster serves as cofactor.

The protein resides in the cytoplasm. The catalysed reaction is iminosuccinate + dihydroxyacetone phosphate = quinolinate + phosphate + 2 H2O + H(+). It functions in the pathway cofactor biosynthesis; NAD(+) biosynthesis; quinolinate from iminoaspartate: step 1/1. In terms of biological role, catalyzes the condensation of iminoaspartate with dihydroxyacetone phosphate to form quinolinate. This Thermosynechococcus vestitus (strain NIES-2133 / IAM M-273 / BP-1) protein is Quinolinate synthase.